Here is a 693-residue protein sequence, read N- to C-terminus: Glycine--tRNA ligase beta subunit (693 aa).

It belongs to the class-II aminoacyl-tRNA synthetase family. Tetramer of two alpha and two beta subunits.

The protein localises to the cytoplasm. It carries out the reaction tRNA(Gly) + glycine + ATP = glycyl-tRNA(Gly) + AMP + diphosphate. In Vibrio vulnificus (strain CMCP6), this protein is Glycine--tRNA ligase beta subunit.